The following is an 873-amino-acid chain: Sister chromatid cohesion protein PDS5 homolog C (873 aa).

HEAT repeat units follow at residues 53–92 (NALT…ITAP), 99–136 (DQMK…VAKV), 149–187 (ALLI…ESED), and 189–227 (PSEM…KLKT). Over residues 266 to 301 (NEKEDSQGHIKRETEVEKAAEISTPERTDAPKDESG) the composition is skewed to basic and acidic residues. 2 disordered regions span residues 266–611 (NEKE…LVGS) and 658–873 (SPLD…KRKR). Phosphothreonine is present on Thr289. Residues 303–319 (SGVSNGVAQQNDSSVDT) show a composition bias toward polar residues. A compositionally biased stretch (basic and acidic residues) spans 320–334 (DSMKKQDDTGAKDEP). Residues 336-348 (QLDNPRNTDLNNT) are compositionally biased toward polar residues. Basic and acidic residues-rich tracts occupy residues 349-365 (TEEK…KENE) and 373-394 (DLSK…DSKD). 2 stretches are compositionally biased toward polar residues: residues 400–411 (PVDSSVTAATSS) and 418–438 (SVQI…SSPS). The segment covering 456–466 (KKKESSTEEVK) has biased composition (basic and acidic residues). Residues 494-510 (KVASSSKTKPTVPPSKK) show a composition bias toward low complexity. Composition is skewed to basic and acidic residues over residues 511 to 526 (STSE…KKVV) and 535 to 555 (TKPK…EESL). Residues 661 to 681 (DESELSQDEEAADQTGQEEDA) show a composition bias toward acidic residues. Low complexity predominate over residues 701–725 (SSAKKGSGAGSSKAKATPASKSSKT). Positions 726–746 (SQDDKTASKSKDSKEASREEE) are enriched in basic and acidic residues. The segment covering 747–757 (ASSEEESEEEE) has biased composition (acidic residues). Composition is skewed to low complexity over residues 795–814 (KATT…PAKS) and 822–831 (KSGSASTPAS). Basic and acidic residues predominate over residues 844-853 (ETPKEPEPAT). Residues 854–866 (KAKSGKSQGSQSK) are compositionally biased toward low complexity.

The protein belongs to the PDS5 family. As to quaternary structure, interacts with the cohesin complex.

Its subcellular location is the nucleus. Its function is as follows. Cohesin cofactor dispensable during the meiotic division but playing an important role in DNA repair by homologous recombination (HR) probably by helping SMC5/SMC6 complex. Regulator of sister chromatid cohesion in mitosis which may stabilize cohesin complex association with chromatin. May couple sister chromatid cohesion during mitosis to DNA replication. Cohesion ensures that chromosome partitioning is accurate in both meiotic and mitotic cells and plays an important role in DNA repair. In Arabidopsis thaliana (Mouse-ear cress), this protein is Sister chromatid cohesion protein PDS5 homolog C.